The sequence spans 204 residues: Large ribosomal subunit protein bL25 (204 aa).

This sequence belongs to the bacterial ribosomal protein bL25 family. CTC subfamily. In terms of assembly, part of the 50S ribosomal subunit; part of the 5S rRNA/L5/L18/L25 subcomplex. Contacts the 5S rRNA. Binds to the 5S rRNA independently of L5 and L18.

Functionally, this is one of the proteins that binds to the 5S RNA in the ribosome where it forms part of the central protuberance. This Rhizobium etli (strain ATCC 51251 / DSM 11541 / JCM 21823 / NBRC 15573 / CFN 42) protein is Large ribosomal subunit protein bL25.